A 601-amino-acid chain; its full sequence is DNA ligase (601 aa).

Asp-258 is a binding site for ATP. The active-site N6-AMP-lysine intermediate is the Lys-260. ATP contacts are provided by Arg-265, Arg-280, Glu-310, Phe-350, Arg-427, and Lys-433.

This sequence belongs to the ATP-dependent DNA ligase family. As to quaternary structure, interacts with the PCNA heterotrimer, probably via subunit PCNA3. Requires a divalent metal cation as cofactor.

The enzyme catalyses ATP + (deoxyribonucleotide)n-3'-hydroxyl + 5'-phospho-(deoxyribonucleotide)m = (deoxyribonucleotide)n+m + AMP + diphosphate.. With respect to regulation, ligase activity stimulated by PCNA heterotrimer. DNA ligase that seals nicks in double-stranded DNA during DNA replication, DNA recombination and DNA repair. Interaction with PCNA enhances ligase activity. DNA polymerase I, DNA ligase and the flap endonuclease may be constitutively associated with the PCNA heterotrimer forming a scanning complex able to couple DNA synthesis and Okazaki fragment maturation. This is DNA ligase from Saccharolobus solfataricus (strain ATCC 35092 / DSM 1617 / JCM 11322 / P2) (Sulfolobus solfataricus).